A 138-amino-acid chain; its full sequence is Cystatin-11 (138 aa).

An N-terminal signal peptide occupies residues 1–26 (MMAEPWQALQLLLAILLTLMALPYQA). 2 cysteine pairs are disulfide-bonded: C94/C102 and C115/C135. Residue N132 is glycosylated (N-linked (GlcNAc...) asparagine).

Belongs to the cystatin family. In terms of tissue distribution, detected in the epithelium and lumen of the epididymis, and in sperm (at protein level).

It localises to the secreted. Its function is as follows. Has antibacterial activity against the Gram-negative bacteria E.coli. May play a role in sperm maturation and fertilization. This chain is Cystatin-11 (CST11), found in Homo sapiens (Human).